The chain runs to 232 residues: Ribonuclease P protein component 3 (232 aa).

The protein belongs to the eukaryotic/archaeal RNase P protein component 3 family. In terms of assembly, consists of a catalytic RNA component and at least 4-5 protein subunits.

Its subcellular location is the cytoplasm. It carries out the reaction Endonucleolytic cleavage of RNA, removing 5'-extranucleotides from tRNA precursor.. Functionally, part of ribonuclease P, a protein complex that generates mature tRNA molecules by cleaving their 5'-ends. The sequence is that of Ribonuclease P protein component 3 from Methanococcus maripaludis (strain C7 / ATCC BAA-1331).